Here is a 431-residue protein sequence, read N- to C-terminus: Zeaxanthin glucosyltransferase (431 aa).

It belongs to the UDP-glycosyltransferase family.

The catalysed reaction is all-trans-zeaxanthin + 2 UDP-alpha-D-glucose = zeaxanthin bis(beta-D-glucoside) + 2 UDP + 2 H(+). The protein operates within carotenoid biosynthesis; zeaxanthin diglucoside biosynthesis. In terms of biological role, catalyzes the glycosylation reaction which converts zeaxanthin to zeaxanthin bis(beta-D-glucoside). The reaction proceeds in two steps with the monoglucoside as an intermediate. The chain is Zeaxanthin glucosyltransferase (crtX) from Pantoea ananas (Erwinia uredovora).